A 347-amino-acid chain; its full sequence is Large ribosomal subunit protein uL10 (347 aa).

A disordered region spans residues 312 to 347; the sequence is AAAPAEEEVKKEEEPEEEEEDHAEEDGMAGLGALFG. Over residues 325–338 the composition is skewed to acidic residues; that stretch reads EPEEEEEDHAEEDG.

It belongs to the universal ribosomal protein uL10 family. Part of the 50S ribosomal subunit. Forms part of the ribosomal stalk which helps the ribosome interact with GTP-bound translation factors. Forms a heptameric L10(L12)2(L12)2(L12)2 complex, where L10 forms an elongated spine to which the L12 dimers bind in a sequential fashion.

Forms part of the ribosomal stalk, playing a central role in the interaction of the ribosome with GTP-bound translation factors. The chain is Large ribosomal subunit protein uL10 from Methanosarcina acetivorans (strain ATCC 35395 / DSM 2834 / JCM 12185 / C2A).